A 223-amino-acid polypeptide reads, in one-letter code: Cytidylate kinase (223 aa).

10 to 18 (GPAGTGKSS) is an ATP binding site.

This sequence belongs to the cytidylate kinase family. Type 1 subfamily.

Its subcellular location is the cytoplasm. The catalysed reaction is CMP + ATP = CDP + ADP. The enzyme catalyses dCMP + ATP = dCDP + ADP. In Mycobacterium leprae (strain Br4923), this protein is Cytidylate kinase.